Here is a 499-residue protein sequence, read N- to C-terminus: Cytochrome P450 76T24 (499 aa).

A helical transmembrane segment spans residues 3 to 23 (VDILLSLVLAFFGWAAIYFLT). Residues N55, N76, N279, and N284 are each glycosylated (N-linked (GlcNAc...) asparagine). Residue C442 participates in heme binding.

Belongs to the cytochrome P450 family.

It localises to the membrane. In Catharanthus roseus (Madagascar periwinkle), this protein is Cytochrome P450 76T24.